The sequence spans 436 residues: MAKIVKVIGREIIDSRGNPTVEAEVHLEGGFVGLAAAPSGASTGSREALELRDGDKARFLGKGVLKAVSAVNNEIAHAIVGKDASNQAEIDQIMIDLDGTDNKSKFGANAILAVSLANAKAAAASKGLPLYAHIAELNGTPGVYSMPLPMMNIINGGEHADNNVDIQEFMIQPVGASTLKEALRIGAEVFHNLAKVLKAKGLNTAVGDEGGFAPNLASNADALACIKEAVEKAGYVLGKDVTLAMDCASSEFYNKDNGLYEMKGEGKSFTSQEFTHYLEGLCKEYPIVSIEDGQDESDWEGFAYQTKVLGDKVQLVGDDLFVTNTKILSRGIENGIANSILIKFNQIGSLTETLAAIKMAKDAGYTAVISHRSGETEDATIADLAVGTAAGQIKTGSMSRSDRVAKYNQLIRIEEALAAAGTPAPFNGRKEVKGQA.

Residue glutamine 167 participates in (2R)-2-phosphoglycerate binding. The Proton donor role is filled by glutamate 209. Aspartate 246, glutamate 291, and aspartate 318 together coordinate Mg(2+). Residues lysine 343, arginine 372, serine 373, and lysine 394 each contribute to the (2R)-2-phosphoglycerate site. The active-site Proton acceptor is lysine 343.

This sequence belongs to the enolase family. In terms of assembly, component of the RNA degradosome, a multiprotein complex involved in RNA processing and mRNA degradation. Mg(2+) is required as a cofactor.

Its subcellular location is the cytoplasm. The protein resides in the secreted. It localises to the cell surface. The enzyme catalyses (2R)-2-phosphoglycerate = phosphoenolpyruvate + H2O. It functions in the pathway carbohydrate degradation; glycolysis; pyruvate from D-glyceraldehyde 3-phosphate: step 4/5. Functionally, catalyzes the reversible conversion of 2-phosphoglycerate (2-PG) into phosphoenolpyruvate (PEP). It is essential for the degradation of carbohydrates via glycolysis. This chain is Enolase, found in Glaesserella parasuis serovar 5 (strain SH0165) (Haemophilus parasuis).